The primary structure comprises 723 residues: Threonine--tRNA ligase, mitochondrial (723 aa).

Position 57 is a phosphoserine (Ser-57). The TGS domain maps to 64 to 126 (RAIKISLPEG…ETDCHLRFLT (63 aa)).

This sequence belongs to the class-II aminoacyl-tRNA synthetase family. In terms of assembly, homodimer.

The protein localises to the mitochondrion matrix. The catalysed reaction is tRNA(Thr) + L-threonine + ATP = L-threonyl-tRNA(Thr) + AMP + diphosphate + H(+). Catalyzes the attachment of threonine to tRNA(Thr) in a two-step reaction: threonine is first activated by ATP to form Thr-AMP and then transferred to the acceptor end of tRNA(Thr). Also edits incorrectly charged tRNA(Thr) via its editing domain. The chain is Threonine--tRNA ligase, mitochondrial (Tars2) from Mus musculus (Mouse).